Reading from the N-terminus, the 541-residue chain is MCSISGIIVKDNQISAKYSIDMMKILKHRGRDNSGLLLDDEVIYFNDFEDVEDLEEEMIGNLSLAHNRLAIVGRYGVQPIPNEDETIWLVCNGEIYNYIELREYLKQNHEFRTDSDNEVIIHLYEEEKLEELDGDYAFAIYDKSKNVVRLARDMFGVKPLFYVDRDKYFAFASERKALWHLLINIDGCERDLDELNSKIKTLKPNSQLIYYLDDNRFEIIEGFKKLELNYMKERSYEEAKEYLDRALKNSVLKRVRGLDKVGIICSGGVDSSLIAKLASLYCEVILYAVGTENSEDLIYAERLAKDLNLKLRKKIISEEEYEEYVFKVAKAIDEVDLMKIGVGIPIYVASEMANEDGLKVVLSGQGADELFGGYARHERIYRERGEEELKKELLKDVYNLYKVNLERDDHCTMANGVELRVPFLDEEVVEIALSIPIEYKMSELSNRPYAESNISLKSEPINGLKNTNLNIKCVRSVRKKILRDVASQYLPDYIAYRPKKAAQYGSGGEKMIYKVAKKYGFSKKRINEFLDMLKRKIVSEF.

The active-site For GATase activity is Cys-2. Positions 2–213 constitute a Glutamine amidotransferase type-2 domain; that stretch reads CSISGIIVKD…PNSQLIYYLD (212 aa). L-glutamine contacts are provided by residues 68–72, 92–94, and Asp-116; these read RLAIV and NGE. ATP-binding positions include Val-289 and 363-364; that span reads SG.

It belongs to the asparagine synthetase family.

The enzyme catalyses L-aspartate + L-glutamine + ATP + H2O = L-asparagine + L-glutamate + AMP + diphosphate + H(+). The protein operates within amino-acid biosynthesis; L-asparagine biosynthesis; L-asparagine from L-aspartate (L-Gln route): step 1/1. The sequence is that of Putative asparagine synthetase [glutamine-hydrolyzing] 1 from Methanocaldococcus jannaschii (strain ATCC 43067 / DSM 2661 / JAL-1 / JCM 10045 / NBRC 100440) (Methanococcus jannaschii).